Consider the following 596-residue polypeptide: Fructan 1-exohydrolase (596 aa).

The N-terminal stretch at 1-20 is a signal peptide; it reads MAQAWAFLLPVLVLGSYVTS. The active site involves Asp-75. N-linked (GlcNAc...) asparagine glycosylation is found at Asn-168, Asn-236, and Asn-248. A disulfide bridge links Cys-446 with Cys-492. Asn-567 carries an N-linked (GlcNAc...) asparagine glycan.

It belongs to the glycosyl hydrolase 32 family.

The catalysed reaction is Hydrolysis of terminal, non-reducing (2-&gt;1)-linked beta-D-fructofuranose residues in fructans.. Inhibited by sucrose. In terms of biological role, hydrolyzes inulin-type beta-(2,1)-fructans. May play a role as a beta-(2,1)-trimmer during graminan biosynthesis. The chain is Fructan 1-exohydrolase from Aegilops tauschii (Tausch's goatgrass).